The sequence spans 496 residues: Aspartyl/glutamyl-tRNA(Asn/Gln) amidotransferase subunit B (496 aa).

It belongs to the GatB/GatE family. GatB subfamily. In terms of assembly, heterotrimer of A, B and C subunits.

It carries out the reaction L-glutamyl-tRNA(Gln) + L-glutamine + ATP + H2O = L-glutaminyl-tRNA(Gln) + L-glutamate + ADP + phosphate + H(+). The catalysed reaction is L-aspartyl-tRNA(Asn) + L-glutamine + ATP + H2O = L-asparaginyl-tRNA(Asn) + L-glutamate + ADP + phosphate + 2 H(+). Functionally, allows the formation of correctly charged Asn-tRNA(Asn) or Gln-tRNA(Gln) through the transamidation of misacylated Asp-tRNA(Asn) or Glu-tRNA(Gln) in organisms which lack either or both of asparaginyl-tRNA or glutaminyl-tRNA synthetases. The reaction takes place in the presence of glutamine and ATP through an activated phospho-Asp-tRNA(Asn) or phospho-Glu-tRNA(Gln). This is Aspartyl/glutamyl-tRNA(Asn/Gln) amidotransferase subunit B from Prochlorococcus marinus (strain MIT 9303).